Reading from the N-terminus, the 237-residue chain is Phosphoribosylaminoimidazole-succinocarboxamide synthase (237 aa).

The protein belongs to the SAICAR synthetase family.

It catalyses the reaction 5-amino-1-(5-phospho-D-ribosyl)imidazole-4-carboxylate + L-aspartate + ATP = (2S)-2-[5-amino-1-(5-phospho-beta-D-ribosyl)imidazole-4-carboxamido]succinate + ADP + phosphate + 2 H(+). It functions in the pathway purine metabolism; IMP biosynthesis via de novo pathway; 5-amino-1-(5-phospho-D-ribosyl)imidazole-4-carboxamide from 5-amino-1-(5-phospho-D-ribosyl)imidazole-4-carboxylate: step 1/2. This is Phosphoribosylaminoimidazole-succinocarboxamide synthase from Deinococcus deserti (strain DSM 17065 / CIP 109153 / LMG 22923 / VCD115).